The chain runs to 371 residues: Flagellar P-ring protein 1 (371 aa).

Positions 1–19 (MRRALLLAALLACAPPAFA) are cleaved as a signal peptide.

Belongs to the FlgI family. As to quaternary structure, the basal body constitutes a major portion of the flagellar organelle and consists of four rings (L,P,S, and M) mounted on a central rod.

Its subcellular location is the periplasm. It localises to the bacterial flagellum basal body. Functionally, assembles around the rod to form the L-ring and probably protects the motor/basal body from shearing forces during rotation. This is Flagellar P-ring protein 1 from Cereibacter sphaeroides (strain ATCC 17023 / DSM 158 / JCM 6121 / CCUG 31486 / LMG 2827 / NBRC 12203 / NCIMB 8253 / ATH 2.4.1.) (Rhodobacter sphaeroides).